A 69-amino-acid chain; its full sequence is MSFYDEIEIEDMIFDADQGILTYPCPCGDKFQIALDDLKDGEEVAVCPSCSLMIKVIFDPEDLEQFEES.

A DPH-type MB domain is found at 3 to 59; it reads FYDEIEIEDMIFDADQGILTYPCPCGDKFQIALDDLKDGEEVAVCPSCSLMIKVIFD. Cys-25, Cys-27, Cys-47, and Cys-50 together coordinate Fe cation.

This sequence belongs to the DPH3 family. As to quaternary structure, component of the 2-(3-amino-3-carboxypropyl)histidine synthase complex composed of DPH1, DPH2, DPH3 and a NADH-dependent reductase, predominantly CBR1. It depends on Fe(2+) as a cofactor.

It localises to the cytoplasm. It is found in the nucleus. It catalyses the reaction [3Fe-4S](1+)-[protein] + Fe(2+)-[Dph3] = [3Fe-4S](0)-[protein] + Fe(3+)-[Dph3]. The catalysed reaction is 2 [3Fe-4S](0)-[protein] + 2 Fe(2+)-[Dph3] + NADH = 2 [4Fe-4S](1+)-[protein] + 2 [Dph3] + NAD(+) + H(+). It functions in the pathway protein modification; peptidyl-diphthamide biosynthesis. Required for the first step of diphthamide biosynthesis, a post-translational modification of histidine which occurs in elongation factor 2. DPH1 and DPH2 transfer a 3-amino-3-carboxypropyl (ACP) group from S-adenosyl-L-methionine (SAM) to a histidine residue, the reaction is assisted by a reduction system comprising KTI11/DPH3 and a NADH-dependent reductase, predominantly CBR1. Acts as an electron donor to reduce the Fe-S cluster in DPH1-DPH2 keeping the [4Fe-4S] clusters in the active and reduced state. Restores iron to DPH1-DPH2 iron-sulfur clusters which have degraded from [4Fe-4S] to [3Fe-4S] by donating an iron atom to reform [4Fe-4S] clusters, in a manner dependent on the presence of elongation factor 2 and SAM. Associates with the elongator complex and is required for tRNA Wobble base modifications mediated by the elongator complex. The elongator complex is required for multiple tRNA modifications, including mcm5U (5-methoxycarbonylmethyl uridine), mcm5s 2U (5-methoxycarbonylmethyl-2-thiouridine), and ncm5U (5-carbamoylmethyl uridine). The sequence is that of Diphthamide biosynthesis protein 3 (DPH3) from Yarrowia lipolytica (strain CLIB 122 / E 150) (Yeast).